Consider the following 138-residue polypeptide: Putative pre-16S rRNA nuclease (138 aa).

The protein belongs to the YqgF nuclease family.

Its subcellular location is the cytoplasm. In terms of biological role, could be a nuclease involved in processing of the 5'-end of pre-16S rRNA. The sequence is that of Putative pre-16S rRNA nuclease from Karelsulcia muelleri (strain GWSS) (Sulcia muelleri).